The primary structure comprises 179 residues: Large ribosomal subunit protein uL6 (179 aa).

This sequence belongs to the universal ribosomal protein uL6 family. Part of the 50S ribosomal subunit.

This protein binds to the 23S rRNA, and is important in its secondary structure. It is located near the subunit interface in the base of the L7/L12 stalk, and near the tRNA binding site of the peptidyltransferase center. The protein is Large ribosomal subunit protein uL6 of Mycobacterium avium (strain 104).